The following is a 208-amino-acid chain: Ribonuclease HII (208 aa).

Residues 5–198 (PLIAGVDEVG…CQPRLEHDCR (194 aa)) form the RNase H type-2 domain. 3 residues coordinate a divalent metal cation: Asp11, Glu12, and Asp106.

It belongs to the RNase HII family. The cofactor is Mn(2+). Requires Mg(2+) as cofactor.

The protein localises to the cytoplasm. The enzyme catalyses Endonucleolytic cleavage to 5'-phosphomonoester.. Functionally, endonuclease that specifically degrades the RNA of RNA-DNA hybrids. The protein is Ribonuclease HII of Microcystis aeruginosa (strain NIES-843 / IAM M-2473).